Here is a 456-residue protein sequence, read N- to C-terminus: tRNA modification GTPase MnmE (456 aa).

3 residues coordinate (6S)-5-formyl-5,6,7,8-tetrahydrofolate: Arg24, Glu81, and Lys120. Residues 216-379 form the TrmE-type G domain; sequence GMTVVIAGRP…LRDHLKACMG (164 aa). Asn226 serves as a coordination point for K(+). Residues 226–231, 245–251, 270–273, and 335–338 contribute to the GTP site; these read NAGKSS, TDIAGTT, DTAG, and NKAD. Ser230 provides a ligand contact to Mg(2+). K(+) is bound by residues Thr245, Ile247, and Thr250. Thr251 contributes to the Mg(2+) binding site. Residue Lys456 participates in (6S)-5-formyl-5,6,7,8-tetrahydrofolate binding.

The protein belongs to the TRAFAC class TrmE-Era-EngA-EngB-Septin-like GTPase superfamily. TrmE GTPase family. Homodimer. Heterotetramer of two MnmE and two MnmG subunits. K(+) is required as a cofactor.

The protein localises to the cytoplasm. Exhibits a very high intrinsic GTPase hydrolysis rate. Involved in the addition of a carboxymethylaminomethyl (cmnm) group at the wobble position (U34) of certain tRNAs, forming tRNA-cmnm(5)s(2)U34. This chain is tRNA modification GTPase MnmE, found in Pseudomonas fluorescens (strain ATCC BAA-477 / NRRL B-23932 / Pf-5).